The sequence spans 62 residues: Photosystem II reaction center protein Z (62 aa).

The next 2 membrane-spanning stretches (helical) occupy residues 8–28 and 41–61; these read AVFA…VVFA and FSGT…NSLI.

This sequence belongs to the PsbZ family. In terms of assembly, PSII is composed of 1 copy each of membrane proteins PsbA, PsbB, PsbC, PsbD, PsbE, PsbF, PsbH, PsbI, PsbJ, PsbK, PsbL, PsbM, PsbT, PsbY, PsbZ, Psb30/Ycf12, at least 3 peripheral proteins of the oxygen-evolving complex and a large number of cofactors. It forms dimeric complexes.

It localises to the plastid. It is found in the chloroplast thylakoid membrane. May control the interaction of photosystem II (PSII) cores with the light-harvesting antenna, regulates electron flow through the 2 photosystem reaction centers. PSII is a light-driven water plastoquinone oxidoreductase, using light energy to abstract electrons from H(2)O, generating a proton gradient subsequently used for ATP formation. The chain is Photosystem II reaction center protein Z from Pelargonium hortorum (Common geranium).